The sequence spans 270 residues: Regulatory protein RecX (270 aa).

Belongs to the RecX family.

The protein resides in the cytoplasm. Its function is as follows. Modulates RecA activity. The protein is Regulatory protein RecX of Bacillus thuringiensis subsp. konkukian (strain 97-27).